Here is a 127-residue protein sequence, read N- to C-terminus: Small ribosomal subunit protein uS11 (127 aa).

This sequence belongs to the universal ribosomal protein uS11 family. Part of the 30S ribosomal subunit. Interacts with proteins S7 and S18. Binds to IF-3.

Located on the platform of the 30S subunit, it bridges several disparate RNA helices of the 16S rRNA. Forms part of the Shine-Dalgarno cleft in the 70S ribosome. The protein is Small ribosomal subunit protein uS11 of Rickettsia rickettsii (strain Iowa).